The following is a 514-amino-acid chain: Putative GTP-binding protein 6 (514 aa).

The tract at residues 48–71 (WAGGGPVRGGGEEDPREDEEEEED) is disordered. The span at 59–71 (EEDPREDEEEEED) shows a compositional bias: acidic residues. Residues 285–449 (PVVSVVGYTN…ALEASVLRAT (165 aa)) form the Hflx-type G domain. Mg(2+)-binding residues include T298 and T319.

This sequence belongs to the TRAFAC class OBG-HflX-like GTPase superfamily. HflX GTPase family. It depends on Mg(2+) as a cofactor.

The chain is Putative GTP-binding protein 6 (Gtpbp6) from Mus musculus (Mouse).